A 229-amino-acid polypeptide reads, in one-letter code: Large ribosomal subunit protein uL1 (229 aa).

This sequence belongs to the universal ribosomal protein uL1 family. In terms of assembly, part of the 50S ribosomal subunit.

In terms of biological role, binds directly to 23S rRNA. The L1 stalk is quite mobile in the ribosome, and is involved in E site tRNA release. Its function is as follows. Protein L1 is also a translational repressor protein, it controls the translation of the L11 operon by binding to its mRNA. This chain is Large ribosomal subunit protein uL1, found in Streptococcus pneumoniae (strain ATCC 700669 / Spain 23F-1).